The primary structure comprises 469 residues: Keratin, type II cytoskeletal 7 (469 aa).

The residue at position 2 (Ser-2) is an N-acetylserine. Residues Ser-2, Ser-6, and Ser-7 each carry the phosphoserine modification. The interval 2-90 is head; it reads SIHFSSPVFT…DPSLQRVRQE (89 aa). Ser-12 carries O-linked (GlcNAc) serine glycosylation. Position 20 is a dimethylated arginine; alternate (Arg-20). Arg-20 carries the omega-N-methylarginine; alternate modification. A phosphoserine mark is found at Ser-53, Ser-71, and Ser-83. Residues 90 to 126 form a coil 1A region; that stretch reads EEREQIKTLNNKFASFIDKVRFLEQQNKLLETKWTLL. The region spanning 91–403 is the IF rod domain; that stretch reads EREQIKTLNN…KLLEGEESRL (313 aa). The residue at position 97 (Thr-97) is a Phosphothreonine. The interval 127–144 is linker 1; sequence QEQKSAKSSRLPDIFEAQ. Residue Lys-130 forms a Glycyl lysine isopeptide (Lys-Gly) (interchain with G-Cter in SUMO2) linkage. Positions 145-236 are coil 1B; that stretch reads IAGLRGQLEA…TLNETELTEL (92 aa). Lys-179 is subject to N6-acetyllysine. Positions 237–260 are linker 12; that stretch reads QSQISDTSVVLSMDNSRSLDLDGI. A phosphoserine mark is found at Ser-252 and Ser-254. A coil 2 region spans residues 261–399; sequence IAEVKAQYEE…ATYRKLLEGE (139 aa). Residues Lys-265 and Lys-286 each participate in a glycyl lysine isopeptide (Lys-Gly) (interchain with G-Cter in SUMO2) cross-link. Thr-289 bears the Phosphothreonine mark. Residues Lys-296 and Lys-331 each participate in a glycyl lysine isopeptide (Lys-Gly) (interchain with G-Cter in SUMO2) cross-link. The segment at 400 to 469 is tail; it reads ESRLAGDGVG…ASASRRSARN (70 aa).

Belongs to the intermediate filament family. In terms of assembly, heterotetramer of two type I and two type II keratins. Interacts with eukaryotic translation initiator factor 3 (eIF3) subunit EIF3S10. Interacts with GPER1. In terms of processing, arg-20 is dimethylated, probably to asymmetric dimethylarginine.

Functionally, blocks interferon-dependent interphase and stimulates DNA synthesis in cells. The protein is Keratin, type II cytoskeletal 7 of Pan troglodytes (Chimpanzee).